The primary structure comprises 1015 residues: SKI family transcriptional corepressor 2 (1015 aa).

Disordered stretches follow at residues 280-316 and 518-934; these read HLLGAPPPPPPPPPPLAELAGAPHAHHKRPRFDDDDD and GAAG…KKDV. A compositionally biased stretch (pro residues) spans 284-295; that stretch reads APPPPPPPPPPL. Residues 575–600 are compositionally biased toward low complexity; that stretch reads PPADSVAAAGAGAAAAGSGPAGSRVP. Over residues 628–637 the composition is skewed to basic and acidic residues; sequence GGKDDAESLA. Basic residues predominate over residues 653–669; sequence HPHHHHHPHHHHHHHHP. 2 stretches are compositionally biased toward pro residues: residues 670–684 and 694–708; these read PQPPSPLLLLPPQPD and APPPPPPPPPPPPLA. Acidic residues-rich tracts occupy residues 730–745 and 754–774; these read DSSEDEDDEEEEQEVD and GEEEEEGRDPDDDEEEDEETE. Basic and acidic residues predominate over residues 793 to 803; that stretch reads PSEKGSSRDRA. Residues 832 to 842 show a composition bias toward pro residues; it reads DLPPPPPPPLA. Basic and acidic residues-rich tracts occupy residues 861 to 877, 885 to 899, and 912 to 922; these read PSLEEQPSYKDSQKTKE, TKDDNSFSDKNKEHS, and FWRERSGEHTQ.

It belongs to the SKI family. In terms of assembly, interacts with SMAD2 and SMAD3. As to expression, expressed in cerebellum, spinal cord and testis. Isoform 2 is present in cerebellum (at protein level).

The protein localises to the nucleus. It localises to the cytoplasm. In terms of biological role, exhibits transcriptional repressor activity. Acts as a TGF-beta antagonist in the nervous system. The chain is SKI family transcriptional corepressor 2 from Homo sapiens (Human).